Here is a 356-residue protein sequence, read N- to C-terminus: Dihydroorotate dehydrogenase (quinone) (356 aa).

FMN-binding positions include 67 to 71 (PGFDK) and Thr-91. Lys-71 serves as a coordination point for substrate. 116–120 (NRMGF) lines the substrate pocket. The FMN site is built by Asn-147 and Asn-178. Asn-178 is a binding site for substrate. Ser-181 serves as the catalytic Nucleophile. Asn-183 serves as a coordination point for substrate. Residues Lys-218 and Ser-246 each contribute to the FMN site. 247-248 (NT) is a binding site for substrate. FMN is bound by residues Gly-268, Gly-297, and 318–319 (YS).

Belongs to the dihydroorotate dehydrogenase family. Type 2 subfamily. As to quaternary structure, monomer. Requires FMN as cofactor.

Its subcellular location is the cell membrane. The catalysed reaction is (S)-dihydroorotate + a quinone = orotate + a quinol. The protein operates within pyrimidine metabolism; UMP biosynthesis via de novo pathway; orotate from (S)-dihydroorotate (quinone route): step 1/1. Functionally, catalyzes the conversion of dihydroorotate to orotate with quinone as electron acceptor. This chain is Dihydroorotate dehydrogenase (quinone), found in Sphingopyxis alaskensis (strain DSM 13593 / LMG 18877 / RB2256) (Sphingomonas alaskensis).